The chain runs to 612 residues: MFSSQNNSYMMMMGGGGIGNINNNQFYSPIISTSAQSFNSIVEWKRDIIRQLNDRNQNQTNNYSEFMRIYTDLLKRERTLNDRTLLYEKEIVSLRNEKKTQQQPPSGSSKMDSSSSSSSSNRVSGMGSTIEEMEQKLFKLQEDLTNSYKRNADNASSILLLNDKNKDLQNELMSKEIEIERIRSTIQQDLDSIKRLEMVVIEKENVSQIIRDELSSLQTEFLHNESKVVKLEQENSSLVERWLRKKNEEASKMNEANDFYQKMVEQRDSTPAKAAVQLSESISNLVVKLPDANDVPIPIVLERGVFSSEAMLPSKAKKRWTGHNSEIYCMAFNSIGNLLATGGGDKCVKVWDVISGQQKSTLLGASQSIVSVSFSPNDESILGTSNDNSARLWNTELGRSRHTLTGHIGKVYTGKFINSNRVVTGSHDRTIKLWDLQKGYCTRTIFCFSSCNDLVILGGSGTHLASGHVDHSVRFWDSNAGEPTQVLSSIHEGQITSITNSPTNTNQILTNSRDHTLKIIDIRTFDTIRTFKDPEYRNGLNWTKASWSPDGRYIASGSIDGSICIWDATNGKTVKVLTKVHNNGSSVCCCSWSPLANIFISADKDKNIIQWE.

A disordered region spans residues 95 to 128 (RNEKKTQQQPPSGSSKMDSSSSSSSSNRVSGMGS). The span at 106–128 (SGSSKMDSSSSSSSSNRVSGMGS) shows a compositional bias: low complexity. WD repeat units follow at residues 322–361 (GHNSEIYCMAFNSIGNLLATGGGDKCVKVWDVISGQQKST), 364–403 (GASQSIVSVSFSPNDESILGTSNDNSARLWNTELGRSRHT), 406–444 (GHIGKVYTGKFINSNRVVTGSHDRTIKLWDLQKGYCTRT), 447–486 (CFSSCNDLVILGGSGTHLASGHVDHSVRFWDSNAGEPTQV), 490–530 (IHEG…TIRT), 535–576 (EYRN…TVKV), and 582–611 (NNGSSVCCCSWSPLANIFISADKDKNIIQW).

This sequence belongs to the WD repeat tipD family.

Functionally, not known; disruption of the gene for tipD results in morphological defects. The protein is Protein tipD (tipD) of Dictyostelium discoideum (Social amoeba).